Here is a 325-residue protein sequence, read N- to C-terminus: Elongation factor P--(R)-beta-lysine ligase (325 aa).

Residue 76–78 participates in substrate binding; the sequence is SPE. Residues 100-102 and N109 each bind ATP; that span reads RNE. Y118 provides a ligand contact to substrate. Residue 244–245 participates in ATP binding; sequence EL. A substrate-binding site is contributed by E251. G300 contributes to the ATP binding site.

It belongs to the class-II aminoacyl-tRNA synthetase family. EpmA subfamily. Homodimer.

The catalysed reaction is D-beta-lysine + L-lysyl-[protein] + ATP = N(6)-((3R)-3,6-diaminohexanoyl)-L-lysyl-[protein] + AMP + diphosphate + H(+). In terms of biological role, with EpmB is involved in the beta-lysylation step of the post-translational modification of translation elongation factor P (EF-P). Catalyzes the ATP-dependent activation of (R)-beta-lysine produced by EpmB, forming a lysyl-adenylate, from which the beta-lysyl moiety is then transferred to the epsilon-amino group of a conserved specific lysine residue in EF-P. This chain is Elongation factor P--(R)-beta-lysine ligase, found in Photorhabdus laumondii subsp. laumondii (strain DSM 15139 / CIP 105565 / TT01) (Photorhabdus luminescens subsp. laumondii).